Reading from the N-terminus, the 233-residue chain is Orotidine 5'-phosphate decarboxylase (233 aa).

Residues Asp-13, Lys-35, 62 to 71 (DLKFHDIPNT), Thr-122, Arg-182, Gln-191, Gly-211, and Arg-212 each bind substrate. Residue Lys-64 is the Proton donor of the active site.

The protein belongs to the OMP decarboxylase family. Type 1 subfamily. In terms of assembly, homodimer.

It catalyses the reaction orotidine 5'-phosphate + H(+) = UMP + CO2. The protein operates within pyrimidine metabolism; UMP biosynthesis via de novo pathway; UMP from orotate: step 2/2. Its function is as follows. Catalyzes the decarboxylation of orotidine 5'-monophosphate (OMP) to uridine 5'-monophosphate (UMP). In Pseudomonas fluorescens (strain ATCC BAA-477 / NRRL B-23932 / Pf-5), this protein is Orotidine 5'-phosphate decarboxylase.